The following is a 413-amino-acid chain: Peptidase T (413 aa).

H82 lines the Zn(2+) pocket. D84 is an active-site residue. Residue D144 coordinates Zn(2+). E178 acts as the Proton acceptor in catalysis. Zn(2+) is bound by residues E179, D201, and H383.

This sequence belongs to the peptidase M20B family. As to quaternary structure, homotrimer. It depends on Zn(2+) as a cofactor.

Its subcellular location is the cytoplasm. The catalysed reaction is Release of the N-terminal residue from a tripeptide.. With respect to regulation, totally inhibited by EDTA, EGTA, and 1,10-phenanthroline. Strongly inhibited by divalent cations such as Cu(2+), Cd(2+), Co(2+) and Mn(2+). Partially inhibited by the reducing agents 2-mercaptoethanol and dithiothreitol. Cleaves the N-terminal amino acid of tripeptides. Shows broad substrate specificity, exhibiting maximum activity against hydrophobic tripeptides, with the highest activity for Met-Gly-Gly. Therefore this enzyme may play an important role in flavor formation during cheese ripening. Is also able to slowly hydrolyze some hydrophobic dipeptides, but displays no activity against tetrapeptides and the tripeptide Phe-Gly-Gly. The sequence is that of Peptidase T (pepT) from Lactobacillus helveticus (Lactobacillus suntoryeus).